Consider the following 513-residue polypeptide: MQLNSTEISDLIKQRIEQFDVVSEARNEGTIVAVSDGIIRVHGLADVMQGEMIELPGNRYAIALNLERDSVGAVVMGPYADLAEGVKVKTTGRILEVPVGRGLLGRVVNTLGEPIDGKGPIDNDGFAPVEVIAPGVIDRKSVSQPVQTGYKAVDSMIPIGRGQRELIIGDRQTGKTAMAIDAIINQRDSGIKCVYVAVGQKASTIANVVRKLEEHGALANTVVVVASASEAAALQFLAPYSGCTMGEYFRDRGEDALIVYDDLSKQAVAYRQISLLLRRPPGREAYPGDVFYLHSRLLERASRVNEEYVEKFTKGAVTGKTGSLTALPIIETQAGDVSAFVPTNVISITDGQIFLETNLFNSGLRPAVNPGISVSRVGGAAQTKIIKKLSGGIRTALAQYRELAAFSQFASDLDDATRAQLEHGERVTELMKQKQYAPMSVAEQAVVIFAAEKGFLKGIALKKVGDFEAALLAFMNAEHANLMKLINDTGDYNAEIEAELKAGLDKFVATQTW.

169 to 176 (GDRQTGKT) contacts ATP.

Belongs to the ATPase alpha/beta chains family. F-type ATPases have 2 components, CF(1) - the catalytic core - and CF(0) - the membrane proton channel. CF(1) has five subunits: alpha(3), beta(3), gamma(1), delta(1), epsilon(1). CF(0) has three main subunits: a(1), b(2) and c(9-12). The alpha and beta chains form an alternating ring which encloses part of the gamma chain. CF(1) is attached to CF(0) by a central stalk formed by the gamma and epsilon chains, while a peripheral stalk is formed by the delta and b chains.

It localises to the cell inner membrane. The enzyme catalyses ATP + H2O + 4 H(+)(in) = ADP + phosphate + 5 H(+)(out). In terms of biological role, produces ATP from ADP in the presence of a proton gradient across the membrane. The alpha chain is a regulatory subunit. In Shewanella amazonensis (strain ATCC BAA-1098 / SB2B), this protein is ATP synthase subunit alpha.